Consider the following 417-residue polypeptide: Phosphoglycerate kinase, cytosolic (417 aa).

Val23, Asp24, Phe25, Asn26, Arg39, Ser61, His62, Gly64, Arg65, Arg132, His168, and Arg169 together coordinate (2R)-3-phosphoglycerate. Gly214 and Ala215 together coordinate ADP. Gly214 is a CDP binding site. Residues Ala215 and Lys216 each coordinate AMP. Position 215 (Ala215) interacts with ATP. A Mg(2+)-binding site is contributed by Ala215. Lys216 is a binding site for (2R)-3-phosphoglycerate. Residue Asp219 coordinates CDP. Asp219 lines the Mg(2+) pocket. ADP-binding residues include Lys220 and Gly238. Lys220 is a binding site for AMP. Position 220 (Lys220) interacts with ATP. Gly238 provides a ligand contact to CDP. AMP is bound by residues Ala239 and Ala311. Ala239 and Ala311 together coordinate ATP. The ADP site is built by Ala311 and Asn335. CDP contacts are provided by Gly336 and Phe341. Phe341, Glu342, Asp374, and Thr375 together coordinate ADP. Glu342 is a binding site for AMP. Positions 342, 374, and 375 each coordinate ATP. Asp374 contributes to the Mg(2+) binding site.

Belongs to the phosphoglycerate kinase family. Monomer. Mg(2+) serves as cofactor.

The protein localises to the cytoplasm. The catalysed reaction is (2R)-3-phosphoglycerate + ATP = (2R)-3-phospho-glyceroyl phosphate + ADP. It functions in the pathway carbohydrate degradation; glycolysis; pyruvate from D-glyceraldehyde 3-phosphate: step 2/5. This chain is Phosphoglycerate kinase, cytosolic (PGKB), found in Crithidia fasciculata.